Reading from the N-terminus, the 513-residue chain is Maturase K (513 aa).

It belongs to the intron maturase 2 family. MatK subfamily.

It is found in the plastid. Its subcellular location is the chloroplast. In terms of biological role, usually encoded in the trnK tRNA gene intron. Probably assists in splicing its own and other chloroplast group II introns. In Phaseolus vulgaris (Kidney bean), this protein is Maturase K.